The sequence spans 414 residues: Tryptophan synthase beta chain (414 aa).

The residue at position 109 (Lys-109) is an N6-(pyridoxal phosphate)lysine.

This sequence belongs to the TrpB family. Tetramer of two alpha and two beta chains. Pyridoxal 5'-phosphate serves as cofactor.

It carries out the reaction (1S,2R)-1-C-(indol-3-yl)glycerol 3-phosphate + L-serine = D-glyceraldehyde 3-phosphate + L-tryptophan + H2O. Its pathway is amino-acid biosynthesis; L-tryptophan biosynthesis; L-tryptophan from chorismate: step 5/5. Functionally, the beta subunit is responsible for the synthesis of L-tryptophan from indole and L-serine. The sequence is that of Tryptophan synthase beta chain from Prochlorococcus marinus (strain AS9601).